Reading from the N-terminus, the 879-residue chain is Interference hedgehog (879 aa).

The N-terminal stretch at 1 to 20 is a signal peptide; it reads MTLLTSSLLLFSLLTSRLEA. The Extracellular portion of the chain corresponds to 21-703; the sequence is IPVLEKSPAH…ETFNMSPMLT (683 aa). 4 Ig-like C2-type domains span residues 45 to 142, 132 to 232, 252 to 340, and 346 to 432; these read PGVR…IARL, PLVV…ERIQ, PHLL…YIKV, and PQIV…LQVN. 4 cysteine pairs are disulfide-bonded: C68–C126, C173–C220, C276–C324, and C367–C414. 2 N-linked (GlcNAc...) asparagine glycosylation sites follow: N102 and N209. The tract at residues 426–467 is disordered; the sequence is GTLLQVNPKQIQEPRESGGTHRPKPNQGSKQKQMYPPSPPNV. Fibronectin type-III domains lie at 461-567 and 575-670; these read PPSP…LQPG and VPEL…TQRP. The N-linked (GlcNAc...) asparagine glycan is linked to N466. Residues R497, K501, K503, and R541 each coordinate heparin. An N-linked (GlcNAc...) asparagine glycan is attached at N557. The disordered stretch occupies residues 662-698; sequence LKQGRTQRPKTSTTEEPTLQMGDRDTTTPSHNETFNM. Polar residues-rich tracts occupy residues 665 to 678 and 688 to 698; these read GRTQ…TEEP and TTPSHNETFNM. An N-linked (GlcNAc...) asparagine glycan is attached at N693. The chain crosses the membrane as a helical span at residues 704 to 724; that stretch reads GTLGGGAVLTLLLISICLCVC. Residues 725–879 lie on the Cytoplasmic side of the membrane; that stretch reads RRRSSRSRGN…SSGSLNSVGV (155 aa). A disordered region spans residues 728–879; it reads SSRSRGNNPN…SSGSLNSVGV (152 aa). Low complexity-rich tracts occupy residues 822-836 and 863-879; these read RAGG…NNNN and SSRS…SVGV.

It belongs to the immunoglobulin superfamily. IHOG family. In terms of assembly, homodimer. Heterotetramer; 2 iHog chains bind 2 hh chains when facilitated by heparin, heparin is required to promote high-affinity interactions between hh and iHog.

It is found in the membrane. Functionally, mediates response to the active Hedgehog (Hh) protein signal in embryos, functioning upstream or at the level of patched (ptc). The sequence is that of Interference hedgehog from Drosophila erecta (Fruit fly).